Reading from the N-terminus, the 261-residue chain is Segregation and condensation protein A (261 aa).

The protein belongs to the ScpA family. Component of a cohesin-like complex composed of ScpA, ScpB and the Smc homodimer, in which ScpA and ScpB bind to the head domain of Smc. The presence of the three proteins is required for the association of the complex with DNA.

It is found in the cytoplasm. Participates in chromosomal partition during cell division. May act via the formation of a condensin-like complex containing Smc and ScpB that pull DNA away from mid-cell into both cell halves. This is Segregation and condensation protein A from Leptospira interrogans serogroup Icterohaemorrhagiae serovar copenhageni (strain Fiocruz L1-130).